Here is a 99-residue protein sequence, read N- to C-terminus: Small ribosomal subunit protein bS20 (99 aa).

This sequence belongs to the bacterial ribosomal protein bS20 family.

In terms of biological role, binds directly to 16S ribosomal RNA. The polypeptide is Small ribosomal subunit protein bS20 (Chlamydia pneumoniae (Chlamydophila pneumoniae)).